The sequence spans 578 residues: Arginine--tRNA ligase (578 aa).

Residues 123-133 (PNIAKEMHVGH) carry the 'HIGH' region motif.

The protein belongs to the class-I aminoacyl-tRNA synthetase family. As to quaternary structure, monomer.

It is found in the cytoplasm. The catalysed reaction is tRNA(Arg) + L-arginine + ATP = L-arginyl-tRNA(Arg) + AMP + diphosphate. The protein is Arginine--tRNA ligase of Baumannia cicadellinicola subsp. Homalodisca coagulata.